We begin with the raw amino-acid sequence, 873 residues long: MASRRKSTTPCMVLASEQDPDLELISDLDEGPPVLTPVENTRAESISSDEEVHESVDSDNQQNKKVEGGYECKYCTFQTPDLNMFTFHVDSEHPNVVLNSSYVCVECNFLTKRYDALSEHNLKYHPGEENFKLTMVKRNNQTIFEQTINDLTFDGSFVKEENAEQAESTEVSSSGISISKTPIMKMMKNKVENKRIAVHHNSVEDVPEEKENEIKPDREEIVENPSSSASESNTSTSIVNRIHPSTASTVVTPAAVLPGLAQVITAVSAQQNSNLIPKVLIPVNSIPTYNAALDNNPLLLNTYNKFPYPTMSEITVLSAQAKYTEEQIKIWFSAQRLKHGVSWTPEEVEEARRKQFNGTVHTVPQTITVIPTHISTGSNGLPSILQTCQIVGQPGLVLTQVAGTNTLPVTAPIALTVAGVPSQNNIQKSQVPAAQPTAETKPATAAVPTSQSVKHETALVNPDSFGIRAKKTKEQLAELKVSYLKNQFPHDSEIIRLMKITGLTKGEIKKWFSDTRYNQRNSKSNQCLHLNNDSSTTIIIDSSDETTESPTVGTAQPKQSWNPFPDFTPQKFKEKTAEQLRVLQASFLNSSVLTDEELNRLRAQTKLTRREIDAWFTEKKKSKALKEEKMEIDESNAGSSKEEAGETSPADESGAPKSGSTGKICKKTPEQLHMLKSAFVRTQWPSPEEYDKLAKESGLARTDIVSWFGDTRYAWKNGNLKWYYYYQSANSSSMNGLSSLRKRGRGRPKGRGRGRPRGRPRGSKRINNWDRGPSLIKFKTGTAILKDYYLKHKFLNEQDLDELVNKSHMGYEQVREWFAERQRRSELGIELFEENEEEDEVIDDQEEDEEETDDSDTWEPPRHVKRKLSKSDD.

A disordered region spans residues 24 to 63 (LISDLDEGPPVLTPVENTRAESISSDEEVHESVDSDNQQN). Phosphothreonine is present on threonine 36. Serine 45, serine 47, and serine 48 each carry phosphoserine. 2 consecutive C2H2-type zinc fingers follow at residues 70 to 93 (YECKYCTFQTPDLNMFTFHVDSEH) and 102 to 125 (YVCVECNFLTKRYDALSEHNLKYH). Residue lysine 159 forms a Glycyl lysine isopeptide (Lys-Gly) (interchain with G-Cter in SUMO2) linkage. Serine 202 carries the post-translational modification Phosphoserine. The interval 202–236 (SVEDVPEEKENEIKPDREEIVENPSSSASESNTST) is disordered. A compositionally biased stretch (basic and acidic residues) spans 212–221 (NEIKPDREEI). Over residues 223–236 (ENPSSSASESNTST) the composition is skewed to low complexity. The segment at 272 to 432 (NSNLIPKVLI…QNNIQKSQVP (161 aa)) is required for dimerization. The interval 272–564 (NSNLIPKVLI…AQPKQSWNPF (293 aa)) is required for interaction with NFYA. The segment at residues 284-346 (NSIPTYNAAL…LKHGVSWTPE (63 aa)) is a DNA-binding region (homeobox 1). Glycyl lysine isopeptide (Lys-Gly) (interchain with G-Cter in SUMO2) cross-links involve residues lysine 441, lysine 454, lysine 485, and lysine 629. 2 consecutive DNA-binding regions (homeobox) follow at residues 464 to 526 (SFGI…KSNQ) and 569 to 630 (PQKF…EEKM). Disordered stretches follow at residues 626 to 667 (KEEK…ICKK) and 732 to 770 (SSMNGLSSLRKRGRGRPKGRGRGRPRGRPRGSKRINNWD). Serine 648 carries the phosphoserine modification. A DNA-binding region (homeobox 4) is located at residues 660 to 722 (STGKICKKTP…YAWKNGNLKW (63 aa)). Residues 734–768 (MNGLSSLRKRGRGRPKGRGRGRPRGRPRGSKRINN) form a required for nuclear localization region. Basic residues predominate over residues 740-764 (LRKRGRGRPKGRGRGRPRGRPRGSK). Serine 774 carries the post-translational modification Phosphoserine. The segment at residues 777-832 (KFKTGTAILKDYYLKHKFLNEQDLDELVNKSHMGYEQVREWFAERQRRSELGIELF) is a DNA-binding region (homeobox 5). Residues 829–873 (IELFEENEEEDEVIDDQEEDEEETDDSDTWEPPRHVKRKLSKSDD) are disordered. Residues 831 to 857 (LFEENEEEDEVIDDQEEDEEETDDSDT) show a composition bias toward acidic residues. The required for repressor activity stretch occupies residues 831–873 (LFEENEEEDEVIDDQEEDEEETDDSDTWEPPRHVKRKLSKSDD). Residues 863-873 (HVKRKLSKSDD) are compositionally biased toward basic residues.

Belongs to the ZHX family. In terms of assembly, forms homodimers. Heterodimer (via HD1 domain) with ZHX2 (via HD1 domain). Also forms a heterodimer with ZHX3 which is a prerequisite for repressor activity. Interacts with ATF7IP and NFYA. Interacts (via homeobox domains) with DNMT3B (via PWWP domain). In terms of tissue distribution, ubiquitously expressed. Expressed in podocytes.

It localises to the nucleus. Its function is as follows. Acts as a transcriptional repressor. Increases DNMT3B-mediated repressive transcriptional activity when DNMT3B is tethered to DNA. May link molecule between DNMT3B and other co-repressor proteins. This is Zinc fingers and homeoboxes protein 1 (ZHX1) from Homo sapiens (Human).